A 473-amino-acid chain; its full sequence is Glutamate--tRNA ligase (473 aa).

The 'HIGH' region motif lies at 10 to 20; the sequence is PSPTGYLHLGN. Zn(2+) contacts are provided by cysteine 98, cysteine 100, cysteine 125, and histidine 127. The short motif at 242 to 246 is the 'KMSKS' region element; it reads KLSKR. Lysine 245 is a binding site for ATP.

This sequence belongs to the class-I aminoacyl-tRNA synthetase family. Glutamate--tRNA ligase type 1 subfamily. In terms of assembly, monomer. Zn(2+) serves as cofactor.

Its subcellular location is the cytoplasm. The catalysed reaction is tRNA(Glu) + L-glutamate + ATP = L-glutamyl-tRNA(Glu) + AMP + diphosphate. Functionally, catalyzes the attachment of glutamate to tRNA(Glu) in a two-step reaction: glutamate is first activated by ATP to form Glu-AMP and then transferred to the acceptor end of tRNA(Glu). The chain is Glutamate--tRNA ligase from Aquifex aeolicus (strain VF5).